Reading from the N-terminus, the 189-residue chain is Putative transcription factor ovo-like protein 3 (189 aa).

The tract at residues 1 to 20 (MPRVFLVRSRRPQPPNWSHL) is disordered. 4 consecutive C2H2-type zinc fingers follow at residues 69–91 (LGCP…LKCH), 97–119 (HVCH…MRTH), 125–148 (FRCG…AKVH), and 164–186 (HVCE…RTLH).

The protein belongs to the krueppel C2H2-type zinc-finger protein family.

Its subcellular location is the nucleus. May act as a transcription regulator. This is Putative transcription factor ovo-like protein 3 (Ovol3) from Mus musculus (Mouse).